Here is a 579-residue protein sequence, read N- to C-terminus: Glutamine--tRNA ligase (579 aa).

Positions P41 to H51 match the 'HIGH' region motif. ATP is bound by residues E42 to N44 and H48 to A54. L-glutamine is bound by residues D74 and Y218. ATP contacts are provided by residues T237, R285–L286, and M293–K295. The 'KMSKS' region motif lies at V292 to R296.

This sequence belongs to the class-I aminoacyl-tRNA synthetase family. As to quaternary structure, monomer.

The protein resides in the cytoplasm. It carries out the reaction tRNA(Gln) + L-glutamine + ATP = L-glutaminyl-tRNA(Gln) + AMP + diphosphate. The sequence is that of Glutamine--tRNA ligase from Xanthomonas campestris pv. campestris (strain 8004).